Consider the following 573-residue polypeptide: MDQWSDNKDAIGMLSESLKEKVVTNEIAPALKEVKNHKYNFETEILNTGNVWNNDSKNGESGSAFGLDKIFQSSDSGNIAEGLELDLGNIMLETHNLESPAWKHADYDGVAASVNDNNNDWKFFVFDEREIDSMLQLFVRDFRADKPALRLAPSKLFYLASRFAFFYMPKEKELGTVLLNAFLCEVNQVTQQHPNDMVLCVQWLANVSLLLFYLKKDNKLDDLTVDIQNRCSELMNSLYITICQDAMRRMNENLEEGMVKYTGIQGLEDILRSRSWNLLRRRPTNDASTSPRSTPSASPRSITKIIASTLHLLEVFYIHPLIRAQCIEQLFSWLGARLFNIVISNKKYLSRAAAMETRFNISSLEEWSQTNSPKLQKPFDYPDEDLKVDLISKLLSLVQLLQWLQCLYRLSEDEDPRALQETLESLDALNPRQIYTAAKLYRPDITETKVSKTFLKKLDAFHEEKLREKINSSDKGDVSYEFELLKDETVFSPLKLPTKAQLINAYSYIVSGNGFNEDRKIVFQPHVSNILIDKLEENGLSMERAELPTSVFEDELQRREWRPDQEVEELLST.

Positions 180 to 464 (NAFLCEVNQV…LKKLDAFHEE (285 aa)) constitute a Dilute domain.

It localises to the cytoplasm. Its subcellular location is the golgi apparatus. This is Dilute domain-containing protein SPAC25B8.08 from Schizosaccharomyces pombe (strain 972 / ATCC 24843) (Fission yeast).